The sequence spans 639 residues: Chaperone protein DnaK (639 aa).

A Phosphothreonine; by autocatalysis modification is found at Thr198. Low complexity predominate over residues 603–618; the sequence is AKAQTQGGAQEGAAKQ. A disordered region spans residues 603 to 639; that stretch reads AKAQTQGGAQEGAAKQSNATADDVVDAEFEEVKDDKK. Positions 625 to 639 are enriched in acidic residues; it reads DVVDAEFEEVKDDKK.

Belongs to the heat shock protein 70 family.

In terms of biological role, acts as a chaperone. In Shewanella oneidensis (strain ATCC 700550 / JCM 31522 / CIP 106686 / LMG 19005 / NCIMB 14063 / MR-1), this protein is Chaperone protein DnaK.